The sequence spans 176 residues: NAD(P)H-quinone oxidoreductase subunit J (176 aa).

Polar residues predominate over residues 1 to 10; it reads MSETPTSPNQ. The tract at residues 1-22 is disordered; that stretch reads MSETPTSPNQDLPEAPQAGPLS.

Belongs to the complex I 30 kDa subunit family. As to quaternary structure, NDH-1 can be composed of about 15 different subunits; different subcomplexes with different compositions have been identified which probably have different functions.

The protein resides in the cellular thylakoid membrane. It catalyses the reaction a plastoquinone + NADH + (n+1) H(+)(in) = a plastoquinol + NAD(+) + n H(+)(out). It carries out the reaction a plastoquinone + NADPH + (n+1) H(+)(in) = a plastoquinol + NADP(+) + n H(+)(out). In terms of biological role, NDH-1 shuttles electrons from an unknown electron donor, via FMN and iron-sulfur (Fe-S) centers, to quinones in the respiratory and/or the photosynthetic chain. The immediate electron acceptor for the enzyme in this species is believed to be plastoquinone. Couples the redox reaction to proton translocation, and thus conserves the redox energy in a proton gradient. Cyanobacterial NDH-1 also plays a role in inorganic carbon-concentration. The polypeptide is NAD(P)H-quinone oxidoreductase subunit J (Synechococcus sp. (strain RCC307)).